We begin with the raw amino-acid sequence, 325 residues long: Eukaryotic translation initiation factor 3 subunit I (325 aa).

4 WD repeats span residues 8–47 (GHER…RLGT), 50–91 (GHTG…ALLK), 144–183 (CNDS…VLVN), and 186–225 (EHSR…HQKT). Residue Thr-219 is modified to Phosphothreonine. Lys-264 carries the N6-acetyllysine modification. A Glycyl lysine isopeptide (Lys-Gly) (interchain with G-Cter in ubiquitin) cross-link involves residue Lys-282. Residues 283-324 (GHFGPINSVAFHPDGKSYSSGGEDGYVRIHYFDPQYFEFEFE) form a WD 5 repeat. The residue at position 308 (Tyr-308) is a Phosphotyrosine.

This sequence belongs to the eIF-3 subunit I family. In terms of assembly, component of the eukaryotic translation initiation factor 3 (eIF-3) complex, which is composed of 13 subunits: EIF3A, EIF3B, EIF3C, EIF3D, EIF3E, EIF3F, EIF3G, EIF3H, EIF3I, EIF3J, EIF3K, EIF3L and EIF3M. The eIF-3 complex appears to include 3 stable modules: module A is composed of EIF3A, EIF3B, EIF3G and EIF3I; module B is composed of EIF3F, EIF3H, and EIF3M; and module C is composed of EIF3C, EIF3D, EIF3E, EIF3K and EIF3L. EIF3C of module C binds EIF3B of module A and EIF3H of module B, thereby linking the three modules. EIF3J is a labile subunit that binds to the eIF-3 complex via EIF3B. The eIF-3 complex interacts with RPS6KB1 under conditions of nutrient depletion. Mitogenic stimulation leads to binding and activation of a complex composed of MTOR and RPTOR, leading to phosphorylation and release of RPS6KB1 and binding of EIF4B to eIF-3. Post-translationally, phosphorylated by TGF-beta type II receptor.

The protein localises to the cytoplasm. Component of the eukaryotic translation initiation factor 3 (eIF-3) complex, which is required for several steps in the initiation of protein synthesis. The eIF-3 complex associates with the 40S ribosome and facilitates the recruitment of eIF-1, eIF-1A, eIF-2:GTP:methionyl-tRNAi and eIF-5 to form the 43S pre-initiation complex (43S PIC). The eIF-3 complex stimulates mRNA recruitment to the 43S PIC and scanning of the mRNA for AUG recognition. The eIF-3 complex is also required for disassembly and recycling of post-termination ribosomal complexes and subsequently prevents premature joining of the 40S and 60S ribosomal subunits prior to initiation. The eIF-3 complex specifically targets and initiates translation of a subset of mRNAs involved in cell proliferation, including cell cycling, differentiation and apoptosis, and uses different modes of RNA stem-loop binding to exert either translational activation or repression. This chain is Eukaryotic translation initiation factor 3 subunit I, found in Bos taurus (Bovine).